A 243-amino-acid polypeptide reads, in one-letter code: Venom nerve growth factor (243 aa).

An N-terminal signal peptide occupies residues 1 to 18 (MSMLCYTLIIAFLIGIWA). A propeptide spanning residues 19–125 (APKSEDNVPL…TLNRNIRTKR (107 aa)) is cleaved from the precursor. The interval 45-66 (HEGLKTSRNTDQRHLAPKKAED) is disordered. Over residues 46 to 66 (EGLKTSRNTDQRHLAPKKAED) the composition is skewed to basic and acidic residues. 3 cysteine pairs are disulfide-bonded: C139/C204, C182/C232, and C192/C234. A glycan (N-linked (GlcNAc...) asparagine) is linked at N148.

The protein belongs to the NGF-beta family. Homodimer; non-covalently linked. Expressed by the venom gland.

Its subcellular location is the secreted. In terms of biological role, nerve growth factor is important for the development and maintenance of the sympathetic and sensory nervous systems. It stimulates division and differentiation of sympathetic and embryonic sensory neurons as well as basal forebrain cholinergic neurons in the brain. Its relevance in the snake venom is not clear. However, it has been shown to inhibit metalloproteinase-dependent proteolysis of platelet glycoprotein Ib alpha, suggesting a metalloproteinase inhibition to prevent metalloprotease autodigestion and/or protection against prey proteases. Binds a lipid between the two protein chains in the homodimer. The lipid-bound form promotes histamine relase from mouse mast cells, contrary to the lipid-free form. This is Venom nerve growth factor from Cryptophis nigrescens (Eastern small-eyed snake).